A 908-amino-acid polypeptide reads, in one-letter code: Collagen alpha-2(I) chain (908 aa).

The segment covering 1–36 (GPMGIMGPRGPPGASGAPGPAGEPGEPGQTGPAGAR) has biased composition (low complexity). 2 disordered regions span residues 1–211 (GPMG…GITG) and 227–908 (IPGP…PGPS). Basic and acidic residues predominate over residues 45 to 59 (AGEDGHPGKPGRPGE). Composition is skewed to low complexity over residues 129 to 158 (VGAP…SAGP), 183 to 197 (AGPR…VSGP), 234 to 249 (PGPV…RGIV), 293 to 309 (STGP…RGIP), 403 to 418 (AGIA…PGFQ), 465 to 474 (PAGPIGSRGP), 526 to 542 (RRGA…AGAN), and 569 to 589 (VGPA…QPGA). Basic and acidic residues predominate over residues 590–599 (KGERGTKGPK). Positions 602 to 617 (NGPVGPTGPVGAAGPA) are enriched in low complexity. Over residues 627–636 (GSRGDGGPPG) the composition is skewed to gly residues. Composition is skewed to low complexity over residues 637 to 647 (ATGFPGAAGRT), 701 to 730 (AGEP…IPGS), 745 to 775 (EPGP…APGE), and 785 to 805 (PGPA…PSGP). The segment covering 809 to 820 (RGDKGEPGDKGP) has biased composition (basic and acidic residues). Residues 893–908 (AGPPGPPGPPGPPGPS) show a composition bias toward pro residues.

Belongs to the fibrillar collagen family. As to quaternary structure, trimers of one alpha 2(I) and two alpha 1(I) chains. Interacts (via C-terminus) with TMEM131 (via PapD-L domain); the interaction is direct and is involved in assembly and TRAPPIII ER-to-Golgi transport complex-dependent secretion of collagen. In terms of processing, prolines at the third position of the tripeptide repeating unit (G-X-Y) are hydroxylated in some or all of the chains. Forms the fibrils of tendon, ligaments and bones. In bones, the fibrils are mineralized with calcium hydroxyapatite.

It localises to the secreted. It is found in the extracellular space. The protein resides in the extracellular matrix. Its function is as follows. Type I collagen is a member of group I collagen (fibrillar forming collagen). The chain is Collagen alpha-2(I) chain from Toxodon sp.